Reading from the N-terminus, the 253-residue chain is tRNA-cytidine(32) 2-sulfurtransferase 2 (253 aa).

Residues 33–38 (SGGKDS) carry the PP-loop motif motif. Cysteine 108, cysteine 111, and cysteine 199 together coordinate [4Fe-4S] cluster.

It belongs to the TtcA family. As to quaternary structure, homodimer. The cofactor is Mg(2+). [4Fe-4S] cluster is required as a cofactor.

The protein localises to the cytoplasm. It catalyses the reaction cytidine(32) in tRNA + S-sulfanyl-L-cysteinyl-[cysteine desulfurase] + AH2 + ATP = 2-thiocytidine(32) in tRNA + L-cysteinyl-[cysteine desulfurase] + A + AMP + diphosphate + H(+). It functions in the pathway tRNA modification. In terms of biological role, catalyzes the ATP-dependent 2-thiolation of cytidine in position 32 of tRNA, to form 2-thiocytidine (s(2)C32). The sulfur atoms are provided by the cysteine/cysteine desulfurase (IscS) system. This is tRNA-cytidine(32) 2-sulfurtransferase 2 from Francisella tularensis subsp. novicida (strain U112).